The primary structure comprises 292 residues: MITGSIVAIVTPMHEDGSLDLNSFRNLLDFHVQEGTDAIVVVGTTGESPTVNVEEHCELIKIAVDHVAGRIPVIAGTGANSTAEAIELTEFAKKAGANMALSVVPYYNKPTQEGLYRHFKAIAEAVELPVILYNVPGRTVADMSNDTILRLAEVPGIVGVKDATGNIDRACDLIARAPKDFALYTGDDMTAVATISLGFHGDISVTANVAPRLMHEMCVAAASGDIAKAREIHFKVLALHRDLFCEANPIPVKWAVHKLGLMPNGIRLPLTTLSEANQPRVLAALRQAGLVA.

Thr45 lines the pyruvate pocket. Residue Tyr133 is the Proton donor/acceptor of the active site. The Schiff-base intermediate with substrate role is filled by Lys161. Ile203 contacts pyruvate.

Belongs to the DapA family. In terms of assembly, homotetramer; dimer of dimers.

It localises to the cytoplasm. The enzyme catalyses L-aspartate 4-semialdehyde + pyruvate = (2S,4S)-4-hydroxy-2,3,4,5-tetrahydrodipicolinate + H2O + H(+). Its pathway is amino-acid biosynthesis; L-lysine biosynthesis via DAP pathway; (S)-tetrahydrodipicolinate from L-aspartate: step 3/4. Functionally, catalyzes the condensation of (S)-aspartate-beta-semialdehyde [(S)-ASA] and pyruvate to 4-hydroxy-tetrahydrodipicolinate (HTPA). This Dechloromonas aromatica (strain RCB) protein is 4-hydroxy-tetrahydrodipicolinate synthase.